Consider the following 263-residue polypeptide: Follistatin-related protein 3 (263 aa).

An N-terminal signal peptide occupies residues Met-1–Ser-26. The TB domain maps to Gly-36–Gly-107. Intrachain disulfides connect Cys-38–Cys-61, Cys-48–Cys-92, Cys-62–Cys-95, Cys-99–Cys-110, Cys-104–Cys-119, Cys-121–Cys-153, Cys-125–Cys-146, Cys-135–Cys-167, Cys-171–Cys-182, Cys-176–Cys-192, Cys-195–Cys-229, Cys-200–Cys-222, and Cys-211–Cys-243. Asn-73 is a glycosylation site (N-linked (GlcNAc...) asparagine). A Follistatin-like 1 domain is found at Cys-99–Cys-119. The Kazal-like 1 domain maps to Leu-113–Lys-169. In terms of domain architecture, Follistatin-like 2 spans Ser-170 to Val-193. Positions Ser-189–Gly-245 constitute a Kazal-like 2 domain. Asn-215 carries N-linked (GlcNAc...) asparagine glycosylation. The interval Ser-242 to Val-263 is disordered. Position 255 is a phosphoserine; by FAM20C (Ser-255).

Interacts with INHBA and INHBB. Interacts with FN1. Interacts with ADAM12. Isoform 2 interacts with MLLT10; the interaction enhances MLLT10 in vitro transcriptional activity and self-association. Interacts with MSTN. In terms of tissue distribution, expressed in a wide range of tissues.

The protein resides in the secreted. Its subcellular location is the nucleus. Its function is as follows. Isoform 1 or the secreted form is a binding and antagonizing protein for members of the TGF-beta family, such as activin, BMP2 and MSTN. Inhibits activin A-, activin B-, BMP2- and MSDT-induced cellular signaling; more effective on activin A than on activin B. Involved in bone formation; inhibits osteoclast differentiation. Involved in hematopoiesis; involved in differentiation of hemopoietic progenitor cells, increases hematopoietic cell adhesion to fibronectin and seems to contribute to the adhesion of hematopoietic precursor cells to the bone marrow stroma. Isoform 2 or the nuclear form is probably involved in transcriptional regulation via interaction with MLLT10. The sequence is that of Follistatin-related protein 3 (FSTL3) from Homo sapiens (Human).